Here is a 542-residue protein sequence, read N- to C-terminus: 4-coumarate--CoA ligase-like 5 (542 aa).

The ATP site is built by S204, S205, G206, T207, T208, and K212. F262 lines the (E)-4-coumaroyl-AMP pocket. R282 provides a ligand contact to CoA. The segment at 284–353 (DFIAALRAIE…SVFPNVELVQ (70 aa)) is SBD1. Residues G331, Q353, G354, and T358 each coordinate (E)-4-coumaroyl-AMP. The ATP site is built by Q353, G354, T358, D418, and R433. The interval 354–397 (GYGLTESSGAVAATVGPEESKAYGSVGKLGSHLQAKIVDPSTGY) is SBD2. Positions 435 and 439 each coordinate (E)-4-coumaroyl-AMP. Residues K441 and G442 each coordinate CoA. Residue K524 coordinates ATP.

This sequence belongs to the ATP-dependent AMP-binding enzyme family. Mg(2+) serves as cofactor.

The catalysed reaction is (E)-4-coumarate + ATP + CoA = (E)-4-coumaroyl-CoA + AMP + diphosphate. The enzyme catalyses (E)-4-coumarate + ATP + H(+) = (E)-4-coumaroyl-AMP + diphosphate. It carries out the reaction (E)-4-coumaroyl-AMP + CoA = (E)-4-coumaroyl-CoA + AMP + H(+). Functionally, carboxylate--CoA ligase that may use 4-coumarate as substrate. Follows a two-step reaction mechanism, wherein the carboxylate substrate first undergoes adenylation by ATP, followed by a thioesterification in the presence of CoA to yield the final CoA thioester. In Oryza sativa subsp. japonica (Rice), this protein is 4-coumarate--CoA ligase-like 5 (4CLL5).